A 204-amino-acid polypeptide reads, in one-letter code: Casparian strip membrane protein 2 (204 aa).

The Cytoplasmic segment spans residues 1–42; sequence MKNESTTIDVPAESSSAMKGKAPLIGVARDHTTSGSGGYNRG. Residues 43 to 63 traverse the membrane as a helical segment; it reads LSIFDFLLRLAAIVAALAAAA. The Extracellular portion of the chain corresponds to 64–92; that stretch reads TMGTSDETLPFFTQFLQFEASYDDLPTFQ. A helical transmembrane segment spans residues 93–113; sequence FFVIAMALVGGYLVLSLPISV. At 114 to 125 the chain is on the cytoplasmic side; the sequence is VTILRPLATAPR. Residues 126-146 form a helical membrane-spanning segment; sequence LLLLVLDTAVLALNTAAASSA. Over 147–178 the chain is Extracellular; that stretch reads AAISYLAHSGNQNTNWLPICQQFGDFCQKSSG. Residues 179–199 form a helical membrane-spanning segment; the sequence is AVVSAFISVVFFTILVVISGV. The Cytoplasmic portion of the chain corresponds to 200 to 204; the sequence is ALKRH.

The protein belongs to the Casparian strip membrane proteins (CASP) family. In terms of assembly, homodimer and heterodimers.

It localises to the cell membrane. Regulates membrane-cell wall junctions and localized cell wall deposition. Required for establishment of the Casparian strip membrane domain (CSD) and the subsequent formation of Casparian strips, a cell wall modification of the root endodermis that determines an apoplastic barrier between the intraorganismal apoplasm and the extraorganismal apoplasm and prevents lateral diffusion. The sequence is that of Casparian strip membrane protein 2 from Arabidopsis lyrata subsp. lyrata (Lyre-leaved rock-cress).